The following is a 581-amino-acid chain: Arginine--tRNA ligase (581 aa).

A 'HIGH' region motif is present at residues 131 to 141 (ANPTGPMHVGH).

It belongs to the class-I aminoacyl-tRNA synthetase family. Monomer.

Its subcellular location is the cytoplasm. The catalysed reaction is tRNA(Arg) + L-arginine + ATP = L-arginyl-tRNA(Arg) + AMP + diphosphate. In Paracoccus denitrificans (strain Pd 1222), this protein is Arginine--tRNA ligase.